The sequence spans 110 residues: UPF0122 protein BCAH187_A3894 (110 aa).

Belongs to the UPF0122 family.

Might take part in the signal recognition particle (SRP) pathway. This is inferred from the conservation of its genetic proximity to ftsY/ffh. May be a regulatory protein. The protein is UPF0122 protein BCAH187_A3894 of Bacillus cereus (strain AH187).